We begin with the raw amino-acid sequence, 104 residues long: Transcription and mRNA export factor ENY2 (104 aa).

Over residues 1-14 (MADYGSDKKSRDNQ) the composition is skewed to basic and acidic residues. A disordered region spans residues 1-22 (MADYGSDKKSRDNQMRSAINQQ).

This sequence belongs to the ENY2 family. As to quaternary structure, component of the nuclear pore complex (NPC)-associated TREX-2 complex (transcription and export complex 2). Component of the SAGA transcription coactivator-HAT complex. Within the SAGA complex, participates in a subcomplex of SAGA called the DUB module (deubiquitination module).

Its subcellular location is the nucleus. It localises to the nucleoplasm. In terms of biological role, involved in mRNA export coupled transcription activation by association with both the TREX-2 and the SAGA complexes. The transcription regulatory histone acetylation (HAT) complex SAGA is a multiprotein complex that activates transcription by remodeling chromatin and mediating histone acetylation and deubiquitination. Within the SAGA complex, participates in a subcomplex that specifically deubiquitinates histones. The SAGA complex is recruited to specific gene promoters by activators, where it is required for transcription. The TREX-2 complex functions in docking export-competent ribonucleoprotein particles (mRNPs) to the nuclear entrance of the nuclear pore complex (nuclear basket). TREX-2 participates in mRNA export and accurate chromatin positioning in the nucleus by tethering genes to the nuclear periphery. The sequence is that of Transcription and mRNA export factor ENY2 from Ciona intestinalis (Transparent sea squirt).